Reading from the N-terminus, the 553-residue chain is Urocanate hydratase (553 aa).

NAD(+) contacts are provided by residues 45 to 46 (GG), Gln-123, 169 to 171 (GMG), Asp-189, Arg-194, 235 to 236 (NA), 256 to 260 (QTSAH), 266 to 267 (YV), Tyr-315, and Gly-485.

Belongs to the urocanase family. The cofactor is NAD(+).

The protein localises to the cytoplasm. It catalyses the reaction 4-imidazolone-5-propanoate = trans-urocanate + H2O. The protein operates within amino-acid degradation; L-histidine degradation into L-glutamate; N-formimidoyl-L-glutamate from L-histidine: step 2/3. Catalyzes the conversion of urocanate to 4-imidazolone-5-propionate. This is Urocanate hydratase from Staphylococcus aureus (strain Mu50 / ATCC 700699).